We begin with the raw amino-acid sequence, 204 residues long: Thiamine-phosphate synthase (204 aa).

Residues Gln32–Lys36 and Asp64 contribute to the 4-amino-2-methyl-5-(diphosphooxymethyl)pyrimidine site. Residues Asp65 and Asp84 each contribute to the Mg(2+) site. 4-amino-2-methyl-5-(diphosphooxymethyl)pyrimidine is bound at residue Thr103. Thr129–Thr131 is a 2-[(2R,5Z)-2-carboxy-4-methylthiazol-5(2H)-ylidene]ethyl phosphate binding site. Lys132 contributes to the 4-amino-2-methyl-5-(diphosphooxymethyl)pyrimidine binding site. A 2-[(2R,5Z)-2-carboxy-4-methylthiazol-5(2H)-ylidene]ethyl phosphate-binding site is contributed by Gly165.

It belongs to the thiamine-phosphate synthase family. The cofactor is Mg(2+).

It catalyses the reaction 2-[(2R,5Z)-2-carboxy-4-methylthiazol-5(2H)-ylidene]ethyl phosphate + 4-amino-2-methyl-5-(diphosphooxymethyl)pyrimidine + 2 H(+) = thiamine phosphate + CO2 + diphosphate. It carries out the reaction 2-(2-carboxy-4-methylthiazol-5-yl)ethyl phosphate + 4-amino-2-methyl-5-(diphosphooxymethyl)pyrimidine + 2 H(+) = thiamine phosphate + CO2 + diphosphate. The enzyme catalyses 4-methyl-5-(2-phosphooxyethyl)-thiazole + 4-amino-2-methyl-5-(diphosphooxymethyl)pyrimidine + H(+) = thiamine phosphate + diphosphate. The protein operates within cofactor biosynthesis; thiamine diphosphate biosynthesis; thiamine phosphate from 4-amino-2-methyl-5-diphosphomethylpyrimidine and 4-methyl-5-(2-phosphoethyl)-thiazole: step 1/1. Condenses 4-methyl-5-(beta-hydroxyethyl)thiazole monophosphate (THZ-P) and 2-methyl-4-amino-5-hydroxymethyl pyrimidine pyrophosphate (HMP-PP) to form thiamine monophosphate (TMP). The chain is Thiamine-phosphate synthase from Bacteroides fragilis (strain YCH46).